Consider the following 116-residue polypeptide: uncharacterized protein (116 aa).

The next 2 membrane-spanning stretches (helical) occupy residues 24 to 44 (VPFAAAGGYPISFLFIKVLTA) and 70 to 90 (VILTHFLVPIFFFLFQYIILS).

The protein localises to the membrane. This is an uncharacterized protein from Saccharomyces cerevisiae (strain ATCC 204508 / S288c) (Baker's yeast).